A 546-amino-acid polypeptide reads, in one-letter code: Choline/ethanolamine transporter FLVCR2 (546 aa).

The disordered stretch occupies residues 1-84 (MVNESLNQEE…TLAQPSGLTH (84 aa)). Topologically, residues 1-93 (MVNESLNQEE…HPNELVKEDS (93 aa)) are cytoplasmic. Over residues 22–49 (QADTSYSTQPSVSIHPSVSGHPSVSIHP) the composition is skewed to polar residues. Tandem repeats lie at residues 31-36 (PSVSIH), 37-42 (PSVSGH), 43-48 (PSVSIH), 49-54 (PSVSGH), 55-60 (PSVSID), 61-66 (PSVSVH), and 67-72 (PSSSAH). The interval 31–84 (PSVSIHPSVSGHPSVSIHPSVSGHPSVSIDPSVSVHPSSSAHPSTLAQPSGLTH) is 9 X 6 AA tandem repeats of P-S-[VS]-S-[VIAG]-[HD]. The span at 54–74 (HPSVSIDPSVSVHPSSSAHPS) shows a compositional bias: low complexity. The 8; approximate repeat unit spans residues 73–78 (PSTLAQ). The stretch at 79–84 (PSGLTH) is one 9; approximate repeat. A helical transmembrane segment spans residues 94 to 118 (VIKVSKRRWAVVLVFSCYSLCNAFQ). The choline site is built by N115, A116, and W119. Topologically, residues 119–136 (WIQYGSINNIFMNFYGVS) are extracellular. The helical transmembrane segment at 137–164 (AFAIDWLSMCYMLTYIPLLLPVAWMLEK) threads the bilayer. The Cytoplasmic portion of the chain corresponds to 165 to 166 (FG). A helical membrane pass occupies residues 167 to 186 (LRTIAITGSALNCLGAWVKL). The Extracellular segment spans residues 187-193 (GSLEPHL). The helical transmembrane segment at 194–222 (FPVTMVGQVICSVAQVFILGMPSRIASVW) threads the bilayer. L212 provides a ligand contact to choline. Residues 223 to 227 (FGANE) are Cytoplasmic-facing. Residues 228 to 253 (VSTACSMAVFGNQLGIAIGFLVPPVL) traverse the membrane as a helical segment. Topologically, residues 254-258 (VPNIK) are extracellular. The helical transmembrane segment at 259 to 288 (DQEKLAYHISIMFYIIGGVATLLFILVIIV) threads the bilayer. Topologically, residues 289-324 (FKEKPKYPPSRAQSLSYALATTDASYLSSIVRLFKN) are cytoplasmic. Residues 325 to 355 (LNFVLLVITYGLNAGAFYALSTLLNRMVIMH) traverse the membrane as a helical segment. Residue Y342 participates in choline binding. The Extracellular segment spans residues 356-359 (FPGQ). Residues 360-388 (EVNAGRIGLTIVIAGMFGAMISGIWLDKS) traverse the membrane as a helical segment. Topologically, residues 389–390 (KT) are cytoplasmic. A helical transmembrane segment spans residues 391 to 413 (YKETTLVVYIMTLVGMVVYTFTL). Residues 414-416 (NLN) lie on the Extracellular side of the membrane. Residues 417–446 (HLWIVFITADSLGFFMTGYLPLGFEFAVEL) form a helical membrane-spanning segment. Residues 447-454 (TYPESEGV) are Cytoplasmic-facing. Residues 455–480 (SSGLLNVSAQVFGIIFTISQGQIIDN) traverse the membrane as a helical segment. Q464 provides a ligand contact to choline. The Extracellular segment spans residues 481–482 (YG). The chain crosses the membrane as a helical span at residues 483–505 (SVPGNIFLCVFLALGSALTAFIK). Over 506–546 (SDLRRQRANKDAPETKVQEEEEEEEESNTSKVPTVLSEAHL) the chain is Cytoplasmic. Residues 511 to 523 (QRANKDAPETKVQ) show a composition bias toward basic and acidic residues. A disordered region spans residues 511 to 546 (QRANKDAPETKVQEEEEEEEESNTSKVPTVLSEAHL). Phosphoserine is present on S535.

This sequence belongs to the major facilitator superfamily. Feline leukemia virus subgroup C receptor (TC 2.A.1.28.1) family. As to quaternary structure, interacts with components of electron transfer chain complexes III, IV and V including CYC1, NDUFA4, COX4I1, ATP5PD and ATP5F1C; these interactions occur in the absence of heme and are disrupted upon heme binding. Interacts with ATP2A2; this interaction occurs in the absence of heme and promotes ATP2A2 proteasomal degradation; the complex is dissociated upon heme binding. Interacts with HMOX1; this interaction is potentiated in the presence of heme.

The protein localises to the cell membrane. It localises to the mitochondrion membrane. The protein resides in the endoplasmic reticulum membrane. It carries out the reaction choline(out) = choline(in). The catalysed reaction is ethanolamine(in) = ethanolamine(out). It catalyses the reaction heme b(in) = heme b(out). In terms of biological role, choline uniporter that specifically mediates choline uptake at the blood-brain-barrier. Responsible for the majority of choline uptake across the blood-brain-barrier from the circulation into the brain. Choline, a nutrient critical for brain development, is a precursor of phosphatidylcholine, as well as betaine. Also mediates transport of ethanolamine. Choline and ethanolamine transport is not coupled with proton transport and is exclusively driven by the choline gradient across the plasma membrane. However, the presence of an inwardly directed proton gradient enhances choline uptake. Also acts as a heme b transporter. Required to regulate mitochondrial respiration processes, ATP synthesis and thermogenesis. At low heme levels, interacts with components of electron transfer chain (ETC) complexes and ATP2A2, leading to ubiquitin-mediated degradation of ATP2A2 and inhibition of thermogenesis. Upon heme binding, dissociates from ETC complexes to allow switching from mitochondrial ATP synthesis to thermogenesis. This is Choline/ethanolamine transporter FLVCR2 (Flvcr2) from Rattus norvegicus (Rat).